The sequence spans 431 residues: Galactose-3-O-sulfotransferase 3 (431 aa).

Residues 1 to 19 (MPPILQRLQQATKMMSRRK) lie on the Cytoplasmic side of the membrane. The helical; Signal-anchor for type II membrane protein transmembrane segment at 20–40 (ILLLVLGCSTVSLLIHQGAQL) threads the bilayer. Residues 41–431 (SWYPKLFPLS…RVLPRGPQGP (391 aa)) are Lumenal-facing. N91, N110, N177, and N302 each carry an N-linked (GlcNAc...) asparagine glycan. Residues 399-431 (QKRRGGARARPEPVLDNPPPRPIRVLPRGPQGP) form a disordered region.

Belongs to the galactose-3-O-sulfotransferase family. The cofactor is Mg(2+). In terms of tissue distribution, highly expressed in thyroid, brain, kidney, heart and spinal cord.

It is found in the golgi apparatus. The protein localises to the golgi stack membrane. It participates in protein modification; carbohydrate sulfation. Transfers a sulfate to position 3 of non-reducing beta-galactosyl residues in N-glycans and core2-branched O-glycans. Has high activity towards Gal-beta-1,4-GlcNAc, Gal-beta-1,4(Fuc-alpha-1,3)GlcNAc and lower activity towards Gal-beta-1,3(Fuc-alpha-1,4)GlcNAc. The protein is Galactose-3-O-sulfotransferase 3 (GAL3ST3) of Homo sapiens (Human).